Consider the following 272-residue polypeptide: Sulfur carrier protein FdhD (272 aa).

C114 serves as the catalytic Cysteine persulfide intermediate.

Belongs to the FdhD family.

The protein localises to the cytoplasm. In terms of biological role, required for formate dehydrogenase (FDH) activity. Acts as a sulfur carrier protein that transfers sulfur from IscS to the molybdenum cofactor prior to its insertion into FDH. The sequence is that of Sulfur carrier protein FdhD from Mycolicibacterium paratuberculosis (strain ATCC BAA-968 / K-10) (Mycobacterium paratuberculosis).